A 214-amino-acid polypeptide reads, in one-letter code: Large ribosomal subunit protein bL25 (214 aa).

The tract at residues 179–214 (VPPTQGPSEAEIEEVEAGDADTPEPEVVGEKEEDEE) is disordered. Over residues 188-202 (AEIEEVEAGDADTPE) the composition is skewed to acidic residues.

It belongs to the bacterial ribosomal protein bL25 family. CTC subfamily. Part of the 50S ribosomal subunit; part of the 5S rRNA/L5/L18/L25 subcomplex. Contacts the 5S rRNA. Binds to the 5S rRNA independently of L5 and L18.

Its function is as follows. This is one of the proteins that binds to the 5S RNA in the ribosome where it forms part of the central protuberance. This chain is Large ribosomal subunit protein bL25, found in Staphylococcus carnosus (strain TM300).